The chain runs to 256 residues: Alcohol dehydrogenase (256 aa).

12 to 35 (FVAGLGGIGLDTSKELVKRDLKNL) lines the NAD(+) pocket. Residue serine 140 participates in substrate binding. Tyrosine 153 serves as the catalytic Proton acceptor.

This sequence belongs to the short-chain dehydrogenases/reductases (SDR) family. In terms of assembly, homodimer.

It carries out the reaction a primary alcohol + NAD(+) = an aldehyde + NADH + H(+). The catalysed reaction is a secondary alcohol + NAD(+) = a ketone + NADH + H(+). This Drosophila mauritiana (Fruit fly) protein is Alcohol dehydrogenase (Adh).